Here is a 1212-residue protein sequence, read N- to C-terminus: DNA-directed RNA polymerase subunit beta' (1212 aa).

Positions 60, 62, 75, and 78 each coordinate Zn(2+). 3 residues coordinate Mg(2+): Asp450, Asp452, and Asp454. Zn(2+) is bound by residues Cys819, Cys893, Cys900, and Cys903.

It belongs to the RNA polymerase beta' chain family. The RNAP catalytic core consists of 2 alpha, 1 beta, 1 beta' and 1 omega subunit. When a sigma factor is associated with the core the holoenzyme is formed, which can initiate transcription. Mg(2+) serves as cofactor. Zn(2+) is required as a cofactor.

It carries out the reaction RNA(n) + a ribonucleoside 5'-triphosphate = RNA(n+1) + diphosphate. Its function is as follows. DNA-dependent RNA polymerase catalyzes the transcription of DNA into RNA using the four ribonucleoside triphosphates as substrates. The protein is DNA-directed RNA polymerase subunit beta' of Streptococcus uberis (strain ATCC BAA-854 / 0140J).